We begin with the raw amino-acid sequence, 37 residues long: Large ribosomal subunit protein bL36 (37 aa).

Belongs to the bacterial ribosomal protein bL36 family.

The chain is Large ribosomal subunit protein bL36 from Bacillus anthracis (strain A0248).